The following is a 232-amino-acid chain: RNA chaperone ProQ (232 aa).

The interval 105-182 (EAKARVQAQR…REEQHTPVSD (78 aa)) is disordered. A compositionally biased stretch (basic and acidic residues) spans 117-136 (QQAKKREAAAAAGEKEDAPR). Over residues 137-146 (RERKPRPTTP) the composition is skewed to basic residues. Basic and acidic residues predominate over residues 147–177 (RRKEGAERKPRAQKPVEKAPKTVKAPREEQH).

It belongs to the ProQ family.

The protein resides in the cytoplasm. RNA chaperone with significant RNA binding, RNA strand exchange and RNA duplexing activities. May regulate ProP activity through an RNA-based, post-transcriptional mechanism. The polypeptide is RNA chaperone ProQ (Shigella boydii serotype 18 (strain CDC 3083-94 / BS512)).